Consider the following 205-residue polypeptide: MSDTTTAENANEPRLITETGLDRRVADIIEPVLVDLGFRLVRVRMSGQNGLTLQVMTERNDGTMTVEDCEEVSKAISPVLDVEDPIDKAYHLEVSSPGIDRPMVRRSDFIRWQGHLLKCETSVLVEGRKRFRGKIVSVDEDGFRLERDQPAYGEEAGVTIPFTALSEARLILTDELIRDALTADKKAKAARAANENFEEEDRDIE.

It belongs to the RimP family.

Its subcellular location is the cytoplasm. In terms of biological role, required for maturation of 30S ribosomal subunits. In Sinorhizobium medicae (strain WSM419) (Ensifer medicae), this protein is Ribosome maturation factor RimP.